Here is a 1132-residue protein sequence, read N- to C-terminus: Fas-binding factor 1 homolog (1132 aa).

Disordered stretches follow at residues 18–50, 65–84, and 89–570; these read DDLLGYDDEGPAKSSQPAGVSSGRARGSSLQAS, AEDMEAAEGSSISDADPQAV, and KEMD…QSYE. Residues 35-46 show a composition bias toward low complexity; the sequence is AGVSSGRARGSS. Composition is skewed to basic and acidic residues over residues 134–148 and 189–206; these read APEKGESAPEMDKKP and GSERRPERKTELGKEKDP. Acidic residues predominate over residues 226–235; the sequence is TFEDDDDDMM. Basic and acidic residues-rich tracts occupy residues 244–270 and 278–303; these read QKGDQKHGKKAEEEEVRPARSKLDELL and ILERPGAGEHREFKLDKKYQKQPEKE. Polar residues-rich tracts occupy residues 331-341 and 388-410; these read RQSVSRFSAEN and AKTSPVVSSQQLLAKEQATSKPN. 2 stretches are compositionally biased toward low complexity: residues 458 to 480 and 511 to 520; these read ATSTGAAAQAAALQDKAASADSS and PSDPAASSPA. Residues 534–548 are compositionally biased toward polar residues; that stretch reads TMPSTPLQAASQLQA. Coiled-coil stretches lie at residues 576–727, 769–882, and 918–1044; these read RAAL…TSAT, ARQR…LAVE, and LAKE…HKKL.

Its subcellular location is the cytoplasm. It is found in the cytoskeleton. The protein localises to the microtubule organizing center. The protein resides in the centrosome. It localises to the centriole. Its subcellular location is the spindle pole. It is found in the cell junction. In terms of biological role, keratin-binding protein required for epithelial cell polarization. Required for ciliogenesis. This Gallus gallus (Chicken) protein is Fas-binding factor 1 homolog (FBF1).